The primary structure comprises 437 residues: Transcription factor TGAL5 (437 aa).

The segment at Gln-33 to Gln-75 is disordered. Over residues Ser-37–Ser-50 the composition is skewed to low complexity. Residues Ala-51–Gln-75 show a composition bias toward polar residues. Residues Asp-126 to Arg-170 enclose the bZIP domain. The interval Lys-128 to Lys-148 is basic motif. The interval Leu-154 to Leu-168 is leucine-zipper. The region spanning Ala-191–Arg-405 is the DOG1 domain.

The protein belongs to the bZIP family. As to quaternary structure, interacts with NPR5/NH4, NH5.1 and NH5.2.

Its subcellular location is the nucleus. In terms of biological role, transcriptional regulator involved in defense response. This chain is Transcription factor TGAL5, found in Oryza sativa subsp. japonica (Rice).